The sequence spans 222 residues: Tetratricopeptide repeat protein 9A (222 aa).

Disordered stretches follow at residues 1–49 and 88–116; these read MERK…AAAE and KGLL…GRLS. A TPR 1 repeat occupies 56-89; sequence RAHEFKSQGAQCYKDKKFREAIGKYHRALLELKG. A Phosphoserine modification is found at Ser-105. 2 TPR repeats span residues 125-160 and 161-194; these read AIEI…LKKE and GENF…RTQQ.

This sequence belongs to the TTC9 family.

The sequence is that of Tetratricopeptide repeat protein 9A (TTC9) from Homo sapiens (Human).